The primary structure comprises 453 residues: MKYNGDKVEGIKIAYIGGGSRGWAWRLMSDLALEQSLSGTVYLYDIDYEAAKTNEIIGNNLKSQWEYKSVDSMEEALKGADFVIISILPGTFNEMMSDVHTPEKFGIYQSVGDTTGPGGLFRALRTIPLYVEFANKIKKYCPEAWVINYTNPMALCVKTLYETFPKIKAFGCCHEVFSTQNLIAKAAKEIEGIECSREDIRTNVLGINHFTWIDKATYKNIDLIPVYKKFVEKYFESGYEDRGDWKESYFNSANKVKFDLFNKYGIIAAAGDRHLAEFIPFFGYLENPEAVAKWKFHLTPVSWRIKNREELIKKSKKMAKGEEKFEIEPSGEEGVKQMKALLGLGDLITNVNLPNRGQMEGVEFNTVVETNAFFTKDRVQPIISGKLPDTVNMLLSPHVLNQKMIFEAAIKKDKELVFHAFLNDPFVRKLTYSDAKKLFNEMFDNAREYLKGW.

11-72 (IKIAYIGGGS…SQWEYKSVDS (62 aa)) is an NAD(+) binding site. Asn-151 serves as a coordination point for substrate. Residue Cys-173 participates in Mn(2+) binding. His-174 acts as the Proton donor in catalysis. Residue His-209 participates in Mn(2+) binding.

Belongs to the glycosyl hydrolase 4 family. In terms of assembly, homotetramer. NAD(+) is required as a cofactor. It depends on Mn(2+) as a cofactor.

The enzyme catalyses [(1-&gt;4)-alpha-D-galacturonosyl](n) + H2O = alpha-D-galacturonate + [(1-&gt;4)-alpha-D-galacturonosyl](n-1). Functionally, alpha-galacturonidase able to catalyze the hydrolysis of the chromogenic substrate p-nitrophenyl-alpha-D-galacturonic acid (pNPalphaGalUA). It is probable that alpha-1,4-di-galacturonate (GalUA(2)) is the naturally occurring substrate. The protein is Alpha-galacturonidase of Thermoanaerobacter italicus (strain DSM 9252 / Ab9).